The following is a 540-amino-acid chain: uncharacterized protein (540 aa).

Residues 1–61 (MFSIFKKKTS…TNDSPWQDPT (61 aa)) are Cytoplasmic-facing. The chain crosses the membrane as a helical span at residues 62 to 82 (YFSSFGKELMFIATCMLAQLL). Topologically, residues 83–108 (NQAGQTHALCIMNVLSKSFNSEANNQ) are extracellular. The chain crosses the membrane as a helical span at residues 109-129 (AWLMASFPLAAGSFILISGRL). Topologically, residues 130 to 131 (GD) are cytoplasmic. A helical membrane pass occupies residues 132 to 152 (IYGLKKMLIVGYVIVIVWSII). The Extracellular segment spans residues 153-169 (SGLSKYSNSDAFFITSR). The helical transmembrane segment at 170–190 (AFQGVGIAFILPNIMGLVGHV) threads the bilayer. Topologically, residues 191 to 203 (YKVGSFRKNIVIS) are cytoplasmic. A helical membrane pass occupies residues 204-224 (FIGACAPTGGMFGGLFGGLIV). At 225–232 (TEDPNQWP) the chain is on the extracellular side. The chain crosses the membrane as a helical span at residues 233–253 (WVFYAFGIATFLSLLMAWYSI). Residues 254-272 (PNNVPTNIHGLSMDWTGSA) are Cytoplasmic-facing. A helical transmembrane segment spans residues 273–293 (LAIIGLILFNFVWNQAPIVGW). Residues 294-295 (DK) lie on the Extracellular side of the membrane. Residues 296–316 (PYIIVLLIISVIFLVAFFVYE) form a helical membrane-spanning segment. Residues 317-334 (SKYAEVPLLPRAMTKNRH) are Cytoplasmic-facing. The chain crosses the membrane as a helical span at residues 335–355 (MIMILLAVFLGWGSFGIWTFY). The Extracellular portion of the chain corresponds to 356–372 (YVSFQLNLRHYSPVWTG). Residues 373–393 (GTYFVFVIFGSMAAFFVAFSI) form a helical membrane-spanning segment. Topologically, residues 394–398 (KRLGP) are cytoplasmic. The chain crosses the membrane as a helical span at residues 399-419 (ALLLCFSLMAFDAGSIMFSVL). Residues 420-429 (PVEQSYWKLN) lie on the Extracellular side of the membrane. Residues 430 to 450 (FAMQAILCFGMDLSFPASSII) form a helical membrane-spanning segment. The Cytoplasmic segment spans residues 451 to 461 (LSDGLPMQYQG). The helical transmembrane segment at 462 to 482 (MAGSLVNTVINYSASLCLGMG) threads the bilayer. Topologically, residues 483–502 (GTVEHQINKSGNDLLKGYRA) are extracellular. A helical membrane pass occupies residues 503 to 523 (AVYLGVGLASLGVVISVTYML). Residues 524–540 (ENLWNRHRKSEDRSLEA) lie on the Cytoplasmic side of the membrane.

This sequence belongs to the major facilitator superfamily.

The protein localises to the membrane. This is an uncharacterized protein from Saccharomyces cerevisiae (strain ATCC 204508 / S288c) (Baker's yeast).